The sequence spans 381 residues: N-acetyl-alpha-D-glucosaminyl L-malate synthase (381 aa).

S16, Y94, and T122 together coordinate (S)-malate. 3 residues coordinate UDP: N206, Q262, and E290.

It belongs to the glycosyltransferase group 1 family. Glycosyltransferase 4 subfamily. In terms of assembly, dimer of tetramers.

It catalyses the reaction (S)-malate + UDP-N-acetyl-alpha-D-glucosamine = (S)-malyl N-acetyl-alpha-D-glucosaminide + UDP + H(+). Its function is as follows. Involved in bacillithiol (BSH) biosynthesis. Catalyzes the first step of the pathway, the formation of N-acetylglucosaminylmalate (GlcNAc-Mal) from UDP-N-acetylglucosamine (UDP-GlcNAc) and L-malate. The sequence is that of N-acetyl-alpha-D-glucosaminyl L-malate synthase from Bacillus anthracis.